A 353-amino-acid chain; its full sequence is UPF0283 membrane protein YcjF (353 aa).

The segment covering 1 to 19 has biased composition (basic and acidic residues); sequence MSEPLKPRIDFAEPLKEEP. A disordered region spans residues 1 to 35; the sequence is MSEPLKPRIDFAEPLKEEPTSAFKAQQTFSEAESR. The next 3 membrane-spanning stretches (helical) occupy residues 70 to 90, 100 to 120, and 213 to 233; these read MVMG…VQWT, VALG…GSVV, and ESTL…FIAW.

The protein belongs to the UPF0283 family.

The protein resides in the cell inner membrane. This chain is UPF0283 membrane protein YcjF, found in Salmonella gallinarum (strain 287/91 / NCTC 13346).